The chain runs to 436 residues: Gamma-glutamyl phosphate reductase (436 aa).

Belongs to the gamma-glutamyl phosphate reductase family.

It localises to the cytoplasm. It carries out the reaction L-glutamate 5-semialdehyde + phosphate + NADP(+) = L-glutamyl 5-phosphate + NADPH + H(+). It participates in amino-acid biosynthesis; L-proline biosynthesis; L-glutamate 5-semialdehyde from L-glutamate: step 2/2. Functionally, catalyzes the NADPH-dependent reduction of L-glutamate 5-phosphate into L-glutamate 5-semialdehyde and phosphate. The product spontaneously undergoes cyclization to form 1-pyrroline-5-carboxylate. The sequence is that of Gamma-glutamyl phosphate reductase from Prochlorococcus marinus (strain SARG / CCMP1375 / SS120).